The sequence spans 136 residues: Small nuclear ribonucleoprotein Sm D3 (136 aa).

Residues 6–78 form the Sm domain; that stretch reads VPIKILHEAE…IRFMILPDML (73 aa). Residues 98–136 form a disordered region; that stretch reads GLGGLDQRGRGRGTAFRRPMGRGGPRGMSRPGGAPTFRG.

It belongs to the snRNP core protein family.

It is found in the nucleus. Its subcellular location is the cytoplasm. The protein localises to the cytosol. Its function is as follows. Plays a role in pre-mRNA splicing as a core component of the spliceosomal U1, U2, U4 and U5 small nuclear ribonucleoproteins (snRNPs), the building blocks of the spliceosome. The protein is Small nuclear ribonucleoprotein Sm D3 (snr-1) of Caenorhabditis elegans.